Here is a 269-residue protein sequence, read N- to C-terminus: Ice-binding protein (269 aa).

An N-terminal signal peptide occupies residues 1 to 24 (MLKINRKYAIILAIVAFSSFQTEA). Short sequence motifs (probable ice-binding motif (T/S-X-T)) lie at residues 45–47 (TVT), 65–67 (SAT), 128–130 (SAQ), 154–156 (TLT), 180–182 (SAT), 198–200 (SIT), and 218–220 (AVT). Positions 240–263 (VPEPDSSLAVLGSGLVSLLFAFRK) are PEP C-terminal anchor. A helical membrane pass occupies residues 245–261 (SSLAVLGSGLVSLLFAF).

It belongs to the ice-binding protein family.

Its subcellular location is the cell outer membrane. In terms of biological role, a probable ice-binding protein that has ice-structuring activities in vitro. Thought not to anchor the cyanobacterium to ice surfaces, as its habitat is shallow puddles fed by glacier meltwater. In Nostoc sp. (strain HG1), this protein is Ice-binding protein.